Reading from the N-terminus, the 78-residue chain is Defensin-like protein 308 (78 aa).

Positions 1 to 19 are cleaved as a signal peptide; sequence MKTSAFFIAVLLILSCSSS. 3 disulfides stabilise this stretch: C31-C50, C37-C55, and C41-C57.

Belongs to the DEFL family.

Its subcellular location is the secreted. The sequence is that of Defensin-like protein 308 from Arabidopsis thaliana (Mouse-ear cress).